Reading from the N-terminus, the 983-residue chain is Probable beta-galactosidase C (983 aa).

Residues 1–23 (MRIFSFLFLLLLGILTGQGLVSG) form the signal peptide. The substrate site is built by Y82, N127, A128, E129, and N187. Catalysis depends on E188, which acts as the Proton donor. N197 is a glycosylation site (N-linked (GlcNAc...) asparagine). Y251 contributes to the substrate binding site. C257 and C304 are joined by a disulfide. N-linked (GlcNAc...) asparagine glycosylation occurs at N276. The active-site Nucleophile is the E287. Y353 contacts substrate. N391, N434, N466, N516, N601, N676, N714, N719, N758, and N804 each carry an N-linked (GlcNAc...) asparagine glycan.

Belongs to the glycosyl hydrolase 35 family.

It localises to the secreted. The catalysed reaction is Hydrolysis of terminal non-reducing beta-D-galactose residues in beta-D-galactosides.. Cleaves beta-linked terminal galactosyl residues from gangliosides, glycoproteins, and glycosaminoglycans. This Aspergillus fumigatus (strain CBS 144.89 / FGSC A1163 / CEA10) (Neosartorya fumigata) protein is Probable beta-galactosidase C (lacC).